A 259-amino-acid chain; its full sequence is Imidazole glycerol phosphate synthase subunit HisF (259 aa).

Active-site residues include D11 and D130.

The protein belongs to the HisA/HisF family. In terms of assembly, heterodimer of HisH and HisF.

The protein resides in the cytoplasm. The enzyme catalyses 5-[(5-phospho-1-deoxy-D-ribulos-1-ylimino)methylamino]-1-(5-phospho-beta-D-ribosyl)imidazole-4-carboxamide + L-glutamine = D-erythro-1-(imidazol-4-yl)glycerol 3-phosphate + 5-amino-1-(5-phospho-beta-D-ribosyl)imidazole-4-carboxamide + L-glutamate + H(+). It participates in amino-acid biosynthesis; L-histidine biosynthesis; L-histidine from 5-phospho-alpha-D-ribose 1-diphosphate: step 5/9. Functionally, IGPS catalyzes the conversion of PRFAR and glutamine to IGP, AICAR and glutamate. The HisF subunit catalyzes the cyclization activity that produces IGP and AICAR from PRFAR using the ammonia provided by the HisH subunit. This chain is Imidazole glycerol phosphate synthase subunit HisF, found in Oleidesulfovibrio alaskensis (strain ATCC BAA-1058 / DSM 17464 / G20) (Desulfovibrio alaskensis).